Consider the following 368-residue polypeptide: Ferrochelatase (368 aa).

Residues His-209 and Glu-290 each contribute to the Fe cation site. The tract at residues 341 to 368 (ADLGGGREATGQAAERSRQRALALGAKQ) is disordered.

It belongs to the ferrochelatase family.

The protein resides in the cytoplasm. The catalysed reaction is heme b + 2 H(+) = protoporphyrin IX + Fe(2+). Its pathway is porphyrin-containing compound metabolism; protoheme biosynthesis; protoheme from protoporphyrin-IX: step 1/1. Catalyzes the ferrous insertion into protoporphyrin IX. The protein is Ferrochelatase of Nitrosococcus oceani (strain ATCC 19707 / BCRC 17464 / JCM 30415 / NCIMB 11848 / C-107).